Reading from the N-terminus, the 544-residue chain is Chaperonin GroEL 2 (544 aa).

Residues 29-32 (TLGP), 86-90 (DGTTT), Gly-413, 479-481 (NAA), and Asp-495 each bind ATP.

The protein belongs to the chaperonin (HSP60) family. As to quaternary structure, forms a cylinder of 14 subunits composed of two heptameric rings stacked back-to-back. Interacts with the co-chaperonin GroES.

It localises to the cytoplasm. The catalysed reaction is ATP + H2O + a folded polypeptide = ADP + phosphate + an unfolded polypeptide.. In terms of biological role, together with its co-chaperonin GroES, plays an essential role in assisting protein folding. The GroEL-GroES system forms a nano-cage that allows encapsulation of the non-native substrate proteins and provides a physical environment optimized to promote and accelerate protein folding. The protein is Chaperonin GroEL 2 of Synechococcus sp. (strain CC9605).